Consider the following 218-residue polypeptide: Large ribosomal subunit protein uL3 (218 aa).

The segment at 126–170 is disordered; sequence HGFSRGPMSHGSKNHREPGSTGAGTTPGRIYPGKRMAGRYGGKKR.

Belongs to the universal ribosomal protein uL3 family. As to quaternary structure, part of the 50S ribosomal subunit. Forms a cluster with proteins L14 and L19.

In terms of biological role, one of the primary rRNA binding proteins, it binds directly near the 3'-end of the 23S rRNA, where it nucleates assembly of the 50S subunit. This chain is Large ribosomal subunit protein uL3, found in Prochlorococcus marinus (strain MIT 9313).